Consider the following 752-residue polypeptide: Ribonucleases P/MRP protein subunit popl-1 (752 aa).

The interval 638 to 663 is disordered; that stretch reads KTTKRKRVNRKKRESKKRRKIEQEKR. The segment covering 640-657 has biased composition (basic residues); the sequence is TKRKRVNRKKRESKKRRK.

Component of nuclear RNase P and RNase MRP ribonucleoproteins. Several subunits of RNase P are also part of the RNase MRP complex.

It localises to the nucleus. Its subcellular location is the nucleolus. The enzyme catalyses Endonucleolytic cleavage of RNA, removing 5'-extranucleotides from tRNA precursor.. Its function is as follows. Component of ribonuclease P, a ribonucleoprotein complex that generates mature tRNA molecules by cleaving their 5'-ends. Also a component of the MRP ribonuclease complex, which cleaves pre-rRNA sequences. This chain is Ribonucleases P/MRP protein subunit popl-1, found in Caenorhabditis elegans.